The sequence spans 351 residues: Glycerol-3-phosphate dehydrogenase [NAD(P)+] (351 aa).

S12, W13, H33, and K114 together coordinate NADPH. Sn-glycerol 3-phosphate is bound by residues K114, G145, and S147. A149 contacts NADPH. Sn-glycerol 3-phosphate contacts are provided by K200, D253, S263, R264, and N265. Residue K200 is the Proton acceptor of the active site. Position 264 (R264) interacts with NADPH. Residues V288 and E290 each contribute to the NADPH site.

Belongs to the NAD-dependent glycerol-3-phosphate dehydrogenase family.

It is found in the cytoplasm. It catalyses the reaction sn-glycerol 3-phosphate + NAD(+) = dihydroxyacetone phosphate + NADH + H(+). The catalysed reaction is sn-glycerol 3-phosphate + NADP(+) = dihydroxyacetone phosphate + NADPH + H(+). It functions in the pathway membrane lipid metabolism; glycerophospholipid metabolism. Its function is as follows. Catalyzes the reduction of the glycolytic intermediate dihydroxyacetone phosphate (DHAP) to sn-glycerol 3-phosphate (G3P), the key precursor for phospholipid synthesis. In Lacticaseibacillus paracasei (strain ATCC 334 / BCRC 17002 / CCUG 31169 / CIP 107868 / KCTC 3260 / NRRL B-441) (Lactobacillus paracasei), this protein is Glycerol-3-phosphate dehydrogenase [NAD(P)+].